A 261-amino-acid polypeptide reads, in one-letter code: uncharacterized protein (261 aa).

The N-terminal stretch at 1-22 (MIHSKKLTLGICLVLLIILIGG) is a signal peptide. A lipid anchor (N-palmitoyl cysteine) is attached at cysteine 23. Cysteine 23 carries the S-diacylglycerol cysteine lipid modification.

This sequence belongs to the staphylococcal tandem lipoprotein family.

The protein localises to the cell membrane. This is an uncharacterized protein from Staphylococcus aureus (strain USA300).